A 479-amino-acid chain; its full sequence is mRNA export factor ICP27 homolog (479 aa).

Low complexity predominate over residues Met-1–Ser-15. 2 disordered regions span residues Met-1–Val-77 and Lys-91–Trp-210. The segment covering Thr-35–Gly-44 has biased composition (acidic residues). Over residues Glu-132–Gly-142 the composition is skewed to basic and acidic residues. Zn(2+) contacts are provided by Cys-354, His-445, Cys-449, and Cys-454. Residues Cys-354 to Cys-454 form a CHC2-type zinc finger.

This sequence belongs to the HHV-1 ICP27 protein family. Interacts with host XPO1 and with the XPO1 export pathway components small GTPase RAN and nucleoporin NUP214. Interacts with host SPEN, OTT1 and OTT3. Interacts with host SRSF1, SRSF3, SRSF7 and SRPK1. Interacts with host DHX9; this interaction may have an inhibitory effect on virion production. Interacts (via N-terminus) with host NXF1; this interaction plays a role in mRNA export. Phosphorylated by cellular protein kinase CK2.

The protein localises to the host nucleus. The protein resides in the host cytoplasm. Functionally, promotes the nuclear export of a subset of early and late viral mRNAs by interacting with mRNAs and cellular export proteins. Additionally may prevent the establishment of cellular antiviral state, by acting as an alternative splicing factor for cellular RNAs such as STAT1, resulting in a STAT1 mRNA incapable of producing the STAT1alpha isoform. This Homo sapiens (Human) protein is mRNA export factor ICP27 homolog.